The sequence spans 397 residues: ATP-dependent RNA helicase eIF4A (397 aa).

The Q motif signature appears at 24 to 52 (DSFDEMNLKPELLRGIYAYGFERPSAIQQ). The Helicase ATP-binding domain occupies 55–225 (IMPVIKGHDV…TKFMREPVRI (171 aa)). An ATP-binding site is contributed by 68-75 (AQSGTGKT). Residues 173-176 (DEAD) carry the DEAD box motif. Residues 236–397 (GIKQFYIAVE…EMPMNVADLI (162 aa)) enclose the Helicase C-terminal domain.

The protein belongs to the DEAD box helicase family. eIF4A subfamily. Component of the eIF4F complex, which composition varies with external and internal environmental conditions. It is composed of at least eIF4A, eIF4E and eIF4G.

The protein resides in the cytoplasm. The enzyme catalyses ATP + H2O = ADP + phosphate + H(+). Functionally, ATP-dependent RNA helicase which is a subunit of the eIF4F complex involved in cap recognition and is required for mRNA binding to ribosome. In the current model of translation initiation, eIF4A unwinds RNA secondary structures in the 5'-UTR of mRNAs which is necessary to allow efficient binding of the small ribosomal subunit, and subsequent scanning for the initiator codon. The protein is ATP-dependent RNA helicase eIF4A (tif-1) of Neurospora crassa (strain ATCC 24698 / 74-OR23-1A / CBS 708.71 / DSM 1257 / FGSC 987).